Here is a 953-residue protein sequence, read N- to C-terminus: Leucine-rich repeat receptor protein kinase HPCA1 (953 aa).

A signal peptide spans 1-23 (MSSRTGASLLLILFFFQICSVSA). Over 24–558 (LTNGLDASAL…EVSSKSSNKS (535 aa)) the chain is Extracellular. LRR repeat units lie at residues 64 to 88 (NDRV…ISFL), 89 to 113 (SELR…IGNL), 115 to 137 (KLRN…IGTL), 138 to 162 (KELI…GLLS), 164 to 187 (LYWF…TSAP), and 192 to 216 (LLQT…LFSS). N-linked (GlcNAc...) asparagine glycosylation is present at Asn-182. Asn-217 carries N-linked (GlcNAc...) asparagine glycosylation. LRR repeat units lie at residues 218 to 241 (MSLI…LSLV), 242 to 265 (KTLT…LNNL), 266 to 290 (TNLN…SLTS), 292 to 311 (YTLD…SWIS), 313 to 337 (LPSL…FFSP), 339 to 361 (QLQT…TDVS), and 362 to 384 (SQLE…ANKV). N-linked (GlcNAc...) asparagine glycosylation is found at Asn-264, Asn-284, and Asn-298. Asn-411 carries an N-linked (GlcNAc...) asparagine glycan. 2 disulfides stabilise this stretch: Cys-421–Cys-424 and Cys-434–Cys-436. N-linked (GlcNAc...) asparagine glycans are attached at residues Asn-456, Asn-459, Asn-510, and Asn-523. The chain crosses the membrane as a helical span at residues 559-579 (ILIGAVVGVVVLLLLLTIAGI). The Cytoplasmic portion of the chain corresponds to 580–953 (YALRQKKRAE…NFPASKLEPQ (374 aa)). Ser-606 and Ser-607 each carry phosphoserine. Residues 631–905 (FSEANDVGGG…EVVKEIENIM (275 aa)) enclose the Protein kinase domain. ATP is bound by residues 637–645 (VGGGGYGKV) and Lys-659. The active-site Proton acceptor is the Asp-755. A phosphothreonine mark is found at Thr-786, Thr-789, and Thr-790. Positions 912-921 (PNSDSATSSR) are enriched in polar residues. The interval 912–953 (PNSDSATSSRTYEDAIKGSGDPYGSESFQYSGNFPASKLEPQ) is disordered. Ser-942 carries the post-translational modification Phosphoserine.

Belongs to the protein kinase superfamily. Ser/Thr protein kinase family. Post-translationally, autophosphorylated at Ser-606, Ser-607, Thr-786, Thr-789, Thr-790 and Ser-942 in response to extracellular hydrogen peroxide. Widely expressed.

The protein localises to the cell membrane. The enzyme catalyses L-seryl-[protein] + ATP = O-phospho-L-seryl-[protein] + ADP + H(+). The catalysed reaction is L-threonyl-[protein] + ATP = O-phospho-L-threonyl-[protein] + ADP + H(+). Its activity is regulated as follows. Activated by autophosphorylation on serine and threonine residues in response to extracellular hydrogen peroxide. Its function is as follows. Leucine-rich repeat receptor protein kinase that acts as sensor of extracellular hydrogen peroxide. Required for intracellular calcium influx in response to extracellular hydrogen peroxide. Mediates hydrogen peroxide-induced activation of calcium channels in guard cells and is required for stomatal closure. This chain is Leucine-rich repeat receptor protein kinase HPCA1, found in Arabidopsis thaliana (Mouse-ear cress).